The sequence spans 70 residues: Drosomycin (70 aa).

A signal peptide spans 1 to 20 (MMQIKYLFALFAVLMLVVLG). A propeptide spanning residues 21-26 (ANEADA) is cleaved from the precursor. Disulfide bonds link cysteine 28–cysteine 70, cysteine 37–cysteine 59, cysteine 45–cysteine 65, and cysteine 49–cysteine 67. Asparagine 42 carries an N-linked (GlcNAc...) asparagine glycan.

Hemolymph (at protein level). Synthesized in the fat body and is secreted into the blood. In larvae, expressed in the visceral branches and posterior spiracles of the trachea.

The protein resides in the secreted. Its function is as follows. Possesses antifungal activity and is active against a relatively broad spectrum of filamentous fungi. It inhibits spore germination at high concentrations and at low concentrations delays growth of hyphae which subsequently exhibit abnormal morphology. Spz C-106 in the hemolymph controls expression of the antifungal peptide by acting as a ligand of Tl and inducing an intracellular signaling pathway. Part of a psh-dependent Toll pathway, which may function in activating the systematic immune response in response to localized melanization of the tracheal system. The protein is Drosomycin (Drs) of Drosophila melanogaster (Fruit fly).